Consider the following 231-residue polypeptide: Phosphatidylserine decarboxylase proenzyme (231 aa).

Serine 189 (schiff-base intermediate with substrate; via pyruvic acid) is an active-site residue. At serine 189 the chain carries Pyruvic acid (Ser); by autocatalysis.

This sequence belongs to the phosphatidylserine decarboxylase family. PSD-A subfamily. As to quaternary structure, heterodimer of a large membrane-associated beta subunit and a small pyruvoyl-containing alpha subunit. Pyruvate serves as cofactor. In terms of processing, is synthesized initially as an inactive proenzyme. Formation of the active enzyme involves a self-maturation process in which the active site pyruvoyl group is generated from an internal serine residue via an autocatalytic post-translational modification. Two non-identical subunits are generated from the proenzyme in this reaction, and the pyruvate is formed at the N-terminus of the alpha chain, which is derived from the carboxyl end of the proenzyme. The post-translation cleavage follows an unusual pathway, termed non-hydrolytic serinolysis, in which the side chain hydroxyl group of the serine supplies its oxygen atom to form the C-terminus of the beta chain, while the remainder of the serine residue undergoes an oxidative deamination to produce ammonia and the pyruvoyl prosthetic group on the alpha chain.

It is found in the cell membrane. It carries out the reaction a 1,2-diacyl-sn-glycero-3-phospho-L-serine + H(+) = a 1,2-diacyl-sn-glycero-3-phosphoethanolamine + CO2. It functions in the pathway phospholipid metabolism; phosphatidylethanolamine biosynthesis; phosphatidylethanolamine from CDP-diacylglycerol: step 2/2. Its function is as follows. Catalyzes the formation of phosphatidylethanolamine (PtdEtn) from phosphatidylserine (PtdSer). This Chelativorans sp. (strain BNC1) protein is Phosphatidylserine decarboxylase proenzyme.